The following is a 493-amino-acid chain: EGF-containing fibulin-like extracellular matrix protein 1 (493 aa).

The signal sequence occupies residues Met-1–Ser-17. The 46-residue stretch at Tyr-26–Leu-71 folds into the EGF-like 1; atypical domain. The EGF-like 2; calcium-binding domain maps to Asp-173–Val-213. Cystine bridges form between Cys-177–Cys-190, Cys-184–Cys-199, Cys-201–Cys-212, Cys-218–Cys-228, Cys-224–Cys-237, Cys-239–Cys-252, Cys-258–Cys-268, Cys-264–Cys-277, Cys-279–Cys-292, Cys-298–Cys-309, Cys-305–Cys-318, Cys-320–Cys-332, Cys-338–Cys-350, Cys-344–Cys-359, and Cys-365–Cys-377. Positions Asp-214 to Val-253 constitute an EGF-like 3; calcium-binding domain. The N-linked (GlcNAc...) asparagine glycan is linked to Asn-249. Residues Asp-254–Glu-293 form the EGF-like 4; calcium-binding domain. The mediates interaction with TIMP3 stretch occupies residues Asp-259 to Phe-493. An EGF-like 5; calcium-binding domain is found at Asp-294 to Gln-333. The 45-residue stretch at Asp-334–Val-378 folds into the EGF-like 6; calcium-binding domain.

It belongs to the fibulin family. As to quaternary structure, interacts with ECM1. Interacts with TIMP3. In terms of tissue distribution, expressed by olfactory ensheathing cells (at protein level). Detected in lung, intestine and kidney.

The protein resides in the secreted. It is found in the extracellular space. It localises to the extracellular matrix. Binds EGFR, the EGF receptor, inducing EGFR autophosphorylation and the activation of downstream signaling pathways. May play a role in cell adhesion and migration. May function as a negative regulator of chondrocyte differentiation. In the olfactory epithelium, it may regulate glial cell migration, differentiation and the ability of glial cells to support neuronal neurite outgrowth. This chain is EGF-containing fibulin-like extracellular matrix protein 1 (Efemp1), found in Rattus norvegicus (Rat).